The chain runs to 282 residues: MTLFESIVLGVVQGLTEFLPVSSTAHLRIIPALAGWEDPGAAFTAVVQLGTLAAVLIYFYKDIYAILAAVIQGIMKGRPFDTHEAAMGWMIAVGTLPIVICGLLFKTEIETSLRSLYWVSGALIGFALLLLVAEWSVKKRLKQNMSMTSMDTIGWKEAIFTGFAQCLALIPGASRSGVTITGGLFLNMSRESAARFSFLLSLPSVFAAALFELYHTWDIIASSAGSIAAITAATITAGITGYLSIAFLISYLKKHTTSIFIIYRIILGAGILSLIAAGRLQP.

7 consecutive transmembrane segments (helical) span residues 1 to 21 (MTLF…FLPV), 40 to 60 (GAAF…IYFY), 85 to 105 (AAMG…GLLF), 117 to 137 (YWVS…EWSV), 196 to 216 (FSFL…LYHT), 229 to 249 (AITA…AFLI), and 258 to 278 (SIFI…IAAG).

It belongs to the UppP family.

It localises to the cell inner membrane. The enzyme catalyses di-trans,octa-cis-undecaprenyl diphosphate + H2O = di-trans,octa-cis-undecaprenyl phosphate + phosphate + H(+). In terms of biological role, catalyzes the dephosphorylation of undecaprenyl diphosphate (UPP). Confers resistance to bacitracin. The protein is Undecaprenyl-diphosphatase of Chlorobium phaeobacteroides (strain DSM 266 / SMG 266 / 2430).